The chain runs to 132 residues: Antileukoproteinase (132 aa).

The signal sequence occupies residues 1-25 (MKSSGLFPFLVLLALGTLAPWAVEG). 2 WAP domains span residues 28 to 76 (KSFK…LDPV) and 82 to 130 (TRRK…VSPV). Cystine bridges form between C35–C64, C43–C68, C51–C63, C57–C72, C89–C118, C96–C122, C105–C117, and C111–C126. Residues 84-132 (RKPGKCPVTYGQCLMLNPPNFCEMDGQCKRDLKCCMGMCGKSCVSPVKA) form an elastase inhibitory domain region.

In terms of assembly, interacts with GRN; interaction protects progranulin from proteolysis. In terms of tissue distribution, detected in blood plasma. Detected in bone marrow myeloid cells. Detected in airway sputum. Detected in parotid gland secretions. Detected in seminal plasma (at protein level). Detected in uterus cervix.

It is found in the secreted. In terms of biological role, acid-stable proteinase inhibitor with strong affinities for trypsin, chymotrypsin, elastase, and cathepsin G. Modulates the inflammatory and immune responses after bacterial infection, and after infection by the intracellular parasite L.major. Down-regulates responses to bacterial lipopolysaccharide (LPS). Plays a role in regulating the activation of NF-kappa-B and inflammatory responses. Has antimicrobial activity against mycobacteria, but not against salmonella. Contributes to normal resistance against infection by M.tuberculosis. Required for normal resistance to infection by L.major. Required for normal wound healing, probably by preventing tissue damage by limiting protease activity. Together with ELANE, required for normal differentiation and proliferation of bone marrow myeloid cells. This Homo sapiens (Human) protein is Antileukoproteinase (SLPI).